A 158-amino-acid chain; its full sequence is Cyclic pyranopterin monophosphate synthase (158 aa).

Substrate is bound by residues 75 to 77 (LCH) and 113 to 114 (ME). Asp-128 is a catalytic residue.

It belongs to the MoaC family. Homohexamer; trimer of dimers.

It carries out the reaction (8S)-3',8-cyclo-7,8-dihydroguanosine 5'-triphosphate = cyclic pyranopterin phosphate + diphosphate. It functions in the pathway cofactor biosynthesis; molybdopterin biosynthesis. Catalyzes the conversion of (8S)-3',8-cyclo-7,8-dihydroguanosine 5'-triphosphate to cyclic pyranopterin monophosphate (cPMP). This chain is Cyclic pyranopterin monophosphate synthase, found in Actinobacillus pleuropneumoniae serotype 5b (strain L20).